The chain runs to 104 residues: Large ribosomal subunit protein bL28 (104 aa).

Belongs to the bacterial ribosomal protein bL28 family.

The sequence is that of Large ribosomal subunit protein bL28 from Wolbachia sp. subsp. Brugia malayi (strain TRS).